The primary structure comprises 313 residues: Ribosomal RNA small subunit methyltransferase H (313 aa).

S-adenosyl-L-methionine contacts are provided by residues 35–37 (GGH), Asp55, Phe79, Asp101, and Gln108.

The protein belongs to the methyltransferase superfamily. RsmH family.

Its subcellular location is the cytoplasm. It catalyses the reaction cytidine(1402) in 16S rRNA + S-adenosyl-L-methionine = N(4)-methylcytidine(1402) in 16S rRNA + S-adenosyl-L-homocysteine + H(+). In terms of biological role, specifically methylates the N4 position of cytidine in position 1402 (C1402) of 16S rRNA. The polypeptide is Ribosomal RNA small subunit methyltransferase H (Klebsiella pneumoniae (strain 342)).